Reading from the N-terminus, the 380-residue chain is Alcohol dehydrogenase (380 aa).

8 residues coordinate Zn(2+): Cys-48, Thr-50, His-70, Cys-100, Cys-103, Cys-106, Cys-114, and Cys-178. An alcohol is bound by residues Thr-50 and His-70. Position 50 (Thr-50) interacts with NAD(+). Residues 203 to 208 (GLGAVG), Asp-227, Arg-232, Thr-273, Val-296, 296 to 298 (VGV), Phe-323, and Arg-373 contribute to the NAD(+) site.

This sequence belongs to the zinc-containing alcohol dehydrogenase family. As to quaternary structure, homodimer. It depends on Zn(2+) as a cofactor.

It localises to the cytoplasm. The enzyme catalyses a primary alcohol + NAD(+) = an aldehyde + NADH + H(+). The catalysed reaction is a secondary alcohol + NAD(+) = a ketone + NADH + H(+). The protein is Alcohol dehydrogenase (ADH) of Malus domestica (Apple).